A 556-amino-acid chain; its full sequence is PPE family protein PPE2 (556 aa).

The segment at 8 to 164 (ASPPEVHSAL…ASYQAVSTAA (157 aa)) is PPE. The tract at residues 201 to 256 (QKIGYTDFYNNVIQPFINWLTNLPFLQAMFSGFDPWLPSLGNPLTFLSPANIAFAL) is SH3-like. A leucine zipper motif region spans residues 319–340 (LEQTLALLPAALPLLAAPLAPL). Disordered regions lie at residues 385 to 418 (TPTP…PPVT) and 443 to 556 (GTGV…TRVE). Positions 400–417 (PTPPPGPPPPPVTAPPPV) are enriched in pro residues. Residues 456–471 (AEAPAAAAAPEEQVQP) show a composition bias toward low complexity. Over residues 472–481 (QRRRRPKIKQ) the composition is skewed to basic residues. The short motif at 473–481 (RRRRPKIKQ) is the Nuclear localization signal element.

It belongs to the mycobacterial PPE family.

Its subcellular location is the secreted. It localises to the host cytoplasm. It is found in the host nucleus. Functionally, inhibits nitric oxide (NO) production in activated macrophages. Acts by inhibiting expression of the host inducible nitric oxide synthase (iNOS). PPE2 is translocated into the host macrophage nucleus, where it interacts with a GATA-binding site overlapping with the TATA box of NOS2 (iNOS) promoter, and strongly inhibits NOS2 gene transcription. Reduction in NO production in turn facilitates intracellular survival of the bacilli inside the macrophage. In addition, disrupts the assembly of NADPH oxidase complex, which inhibits NADPH oxidase-mediated reactive oxygen species (ROS) generation in macrophages and favors M.tuberculosis survival. Acts by interacting with NCF2, the cytosolic subunit of NADPH oxidase, and preventing translocation of NCF2 and NCF1 to the membrane, which causes a reduction of the functional assembly of NADPH oxidase complex and a decrease in NADPH oxidase activity. This Mycobacterium tuberculosis (strain ATCC 25618 / H37Rv) protein is PPE family protein PPE2 (PPE2).